A 344-amino-acid chain; its full sequence is Holliday junction branch migration complex subunit RuvB (344 aa).

The segment covering 1–10 (MAIQSSSSGS) has biased composition (low complexity). The interval 1–37 (MAIQSSSSGSKPPAPKRLVAPEATAAEGDGGRDEGLR) is disordered. The large ATPase domain (RuvB-L) stretch occupies residues 13–197 (PAPKRLVAPE…FGLIQRLEFY (185 aa)). ATP-binding positions include Leu36, Arg37, Gly78, Lys81, Thr82, Thr83, 144–146 (EDF), Arg187, Tyr197, and Arg234. Thr82 contacts Mg(2+). The small ATPAse domain (RuvB-S) stretch occupies residues 198–268 (SCSDLEAIVS…VVVEALAMHR (71 aa)). Residues 271 to 344 (GRGLDPSDRR…DAGRAHLEAA (74 aa)) are head domain (RuvB-H). Residues Arg326 and Arg331 each coordinate DNA.

Belongs to the RuvB family. In terms of assembly, homohexamer. Forms an RuvA(8)-RuvB(12)-Holliday junction (HJ) complex. HJ DNA is sandwiched between 2 RuvA tetramers; dsDNA enters through RuvA and exits via RuvB. An RuvB hexamer assembles on each DNA strand where it exits the tetramer. Each RuvB hexamer is contacted by two RuvA subunits (via domain III) on 2 adjacent RuvB subunits; this complex drives branch migration. In the full resolvosome a probable DNA-RuvA(4)-RuvB(12)-RuvC(2) complex forms which resolves the HJ.

It localises to the cytoplasm. It catalyses the reaction ATP + H2O = ADP + phosphate + H(+). Functionally, the RuvA-RuvB-RuvC complex processes Holliday junction (HJ) DNA during genetic recombination and DNA repair, while the RuvA-RuvB complex plays an important role in the rescue of blocked DNA replication forks via replication fork reversal (RFR). RuvA specifically binds to HJ cruciform DNA, conferring on it an open structure. The RuvB hexamer acts as an ATP-dependent pump, pulling dsDNA into and through the RuvAB complex. RuvB forms 2 homohexamers on either side of HJ DNA bound by 1 or 2 RuvA tetramers; 4 subunits per hexamer contact DNA at a time. Coordinated motions by a converter formed by DNA-disengaged RuvB subunits stimulates ATP hydrolysis and nucleotide exchange. Immobilization of the converter enables RuvB to convert the ATP-contained energy into a lever motion, pulling 2 nucleotides of DNA out of the RuvA tetramer per ATP hydrolyzed, thus driving DNA branch migration. The RuvB motors rotate together with the DNA substrate, which together with the progressing nucleotide cycle form the mechanistic basis for DNA recombination by continuous HJ branch migration. Branch migration allows RuvC to scan DNA until it finds its consensus sequence, where it cleaves and resolves cruciform DNA. The polypeptide is Holliday junction branch migration complex subunit RuvB (Synechococcus sp. (strain RCC307)).